Reading from the N-terminus, the 517-residue chain is Cytochrome P450 monooxygenase TRI4 (517 aa).

Residues 15–37 form a helical membrane-spanning segment; it reads AVGAAVAVGALYFFCQCFYNLYL. The N-linked (GlcNAc...) asparagine glycan is linked to Asn-444. Position 452 (Cys-452) interacts with heme.

This sequence belongs to the cytochrome P450 family. Requires heme as cofactor.

The protein resides in the membrane. Its pathway is sesquiterpene biosynthesis; trichothecene biosynthesis. In terms of biological role, cytochrome P450 monooxygenase; part of the gene cluster that mediates the production of the antimicrobial trichothecene harzianum A (HA) that plays a role in Botrytis cinerea antagonistic activity and plant defense priming. The biosynthesis of harzianum A begins with the cyclization of farnesyl diphosphate to trichodiene and is catalyzed by the trichodiene synthase TRI5. Trichodiene undergoes a series of oxygenations catalyzed by the cytochrome P450 monooxygenase TRI4. TRI4 controls the addition of 3 oxygens at C-2, C-11, and the C-12, C-13-epoxide to form the intermediate isotrichodiol. Isotrichodiol then undergoes a non-enzymatic isomerization and cyclization to form 12,13-epoxytrichothec-9-ene (EPT) which is further converted to trichodermol by the cytochrome P450 monooxygenase TRI11 via C-4 hydroxylation. The last step of HA synthesis is esterification of an octatriendioyl moiety to the C-4 oxygen of trichodermol. The octatriendioyl moiety is probably produced by the polyketide synthase TRI17 and the esterification performed by the trichothecene O-acetyltransferase TRI3. The protein is Cytochrome P450 monooxygenase TRI4 of Trichoderma arundinaceum.